Reading from the N-terminus, the 140-residue chain is Ribosome maturation factor RimP (140 aa).

This sequence belongs to the RimP family.

Its subcellular location is the cytoplasm. Functionally, required for maturation of 30S ribosomal subunits. The protein is Ribosome maturation factor RimP of Campylobacter fetus subsp. fetus (strain 82-40).